A 1150-amino-acid chain; its full sequence is ATP-dependent helicase/deoxyribonuclease subunit B (1150 aa).

ATP is bound at residue 8–15; that stretch reads GRAGSGKS. Residues cysteine 789, cysteine 1109, cysteine 1112, and cysteine 1118 each contribute to the [4Fe-4S] cluster site.

This sequence belongs to the helicase family. AddB/RexB type 1 subfamily. Heterodimer of AddA and AddB. Mg(2+) is required as a cofactor. [4Fe-4S] cluster serves as cofactor.

In terms of biological role, the heterodimer acts as both an ATP-dependent DNA helicase and an ATP-dependent, dual-direction single-stranded exonuclease. Recognizes the chi site generating a DNA molecule suitable for the initiation of homologous recombination. The AddB subunit has 5' -&gt; 3' nuclease activity but not helicase activity. In Clostridium kluyveri (strain NBRC 12016), this protein is ATP-dependent helicase/deoxyribonuclease subunit B.